The following is a 708-amino-acid chain: Fatty acid oxidation complex subunit alpha (708 aa).

An enoyl-CoA hydratase region spans residues 1 to 190; that stretch reads MDMEKTFNLT…KMGLVDDAVP (190 aa). A 3-hydroxyacyl-CoA dehydrogenase region spans residues 310 to 708; sequence QKVNKVMVLG…MAEEGTRFFS (399 aa).

This sequence in the N-terminal section; belongs to the enoyl-CoA hydratase/isomerase family. In the central section; belongs to the 3-hydroxyacyl-CoA dehydrogenase family. As to quaternary structure, heterotetramer of two alpha chains (FadJ) and two beta chains (FadI).

It is found in the cytoplasm. It carries out the reaction a (3S)-3-hydroxyacyl-CoA = a (2E)-enoyl-CoA + H2O. It catalyses the reaction a 4-saturated-(3S)-3-hydroxyacyl-CoA = a (3E)-enoyl-CoA + H2O. The catalysed reaction is a (3S)-3-hydroxyacyl-CoA + NAD(+) = a 3-oxoacyl-CoA + NADH + H(+). The enzyme catalyses (3S)-3-hydroxybutanoyl-CoA = (3R)-3-hydroxybutanoyl-CoA. The protein operates within lipid metabolism; fatty acid beta-oxidation. Functionally, catalyzes the formation of a hydroxyacyl-CoA by addition of water on enoyl-CoA. Also exhibits 3-hydroxyacyl-CoA epimerase and 3-hydroxyacyl-CoA dehydrogenase activities. The sequence is that of Fatty acid oxidation complex subunit alpha from Shewanella halifaxensis (strain HAW-EB4).